Consider the following 119-residue polypeptide: Ribonuclease P protein component (119 aa).

The protein belongs to the RnpA family. In terms of assembly, consists of a catalytic RNA component (M1 or rnpB) and a protein subunit.

It catalyses the reaction Endonucleolytic cleavage of RNA, removing 5'-extranucleotides from tRNA precursor.. In terms of biological role, RNaseP catalyzes the removal of the 5'-leader sequence from pre-tRNA to produce the mature 5'-terminus. It can also cleave other RNA substrates such as 4.5S RNA. The protein component plays an auxiliary but essential role in vivo by binding to the 5'-leader sequence and broadening the substrate specificity of the ribozyme. The protein is Ribonuclease P protein component of Bacillus pumilus (strain SAFR-032).